Consider the following 633-residue polypeptide: tRNA uridine 5-carboxymethylaminomethyl modification enzyme MnmG (633 aa).

13-18 (GGGHAG) contacts FAD. Residue 273–287 (GPRYCPSIEDKINRF) coordinates NAD(+).

This sequence belongs to the MnmG family. As to quaternary structure, homodimer. Heterotetramer of two MnmE and two MnmG subunits. FAD serves as cofactor.

The protein localises to the cytoplasm. Functionally, NAD-binding protein involved in the addition of a carboxymethylaminomethyl (cmnm) group at the wobble position (U34) of certain tRNAs, forming tRNA-cmnm(5)s(2)U34. This Pseudoalteromonas atlantica (strain T6c / ATCC BAA-1087) protein is tRNA uridine 5-carboxymethylaminomethyl modification enzyme MnmG.